We begin with the raw amino-acid sequence, 339 residues long: GATA transcription factor 5 (339 aa).

4 disordered regions span residues methionine 68–aspartate 88, glutamate 126–glycine 145, proline 163–proline 206, and glutamate 221–leucine 242. The segment covering glutamate 126–proline 136 has biased composition (polar residues). The Nuclear localization signal motif lies at lysine 167–arginine 174. A compositionally biased stretch (low complexity) spans serine 181–proline 206. The segment at leucine 245–serine 299 adopts a GATA-type zinc-finger fold. Residues arginine 314–phenylalanine 339 form a disordered region. Over residues aspartate 321–phenylalanine 339 the composition is skewed to polar residues.

Belongs to the type IV zinc-finger family. Class A subfamily.

Its subcellular location is the nucleus. In terms of biological role, transcriptional activator that specifically binds 5'-GATA-3' or 5'-GAT-3' motifs within gene promoters. May be involved in the regulation of some light-responsive genes. The chain is GATA transcription factor 5 (GATA5) from Arabidopsis thaliana (Mouse-ear cress).